Consider the following 557-residue polypeptide: Organic cation/carnitine transporter 2 (557 aa).

Residues M1–L20 lie on the Cytoplasmic side of the membrane. The chain crosses the membrane as a helical span at residues I21 to F41. The Extracellular portion of the chain corresponds to L42–A142. N-linked (GlcNAc...) asparagine glycans are attached at residues N57, N64, and N91. Residues P143–L163 form a helical membrane-spanning segment. The Cytoplasmic segment spans residues S164–V172. The chain crosses the membrane as a helical span at residues L173–F193. At E194–V197 the chain is on the extracellular side. The helical transmembrane segment at V198–G218 threads the bilayer. G218–S225 lines the ATP pocket. Residues T219 to T232 lie on the Cytoplasmic side of the membrane. The chain crosses the membrane as a helical span at residues L233–I253. Residues R254–R257 are Extracellular-facing. A helical membrane pass occupies residues M258 to P278. The Cytoplasmic portion of the chain corresponds to E279–R341. The helical transmembrane segment at M342–S362 threads the bilayer. Residues L363–F373 lie on the Extracellular side of the membrane. A helical membrane pass occupies residues V374–L394. Topologically, residues Q395–A406 are cytoplasmic. Residues L407 to L427 form a helical membrane-spanning segment. Topologically, residues A428 to V430 are extracellular. A helical transmembrane segment spans residues L431–A451. The Cytoplasmic portion of the chain corresponds to E452–G462. The helical transmembrane segment at V463–L483 threads the bilayer. Over G484–R488 the chain is Extracellular. Position 486 is a phosphotyrosine (Y486). Residues F489–L509 form a helical membrane-spanning segment. The disordered stretch occupies residues T535–F557. T550 is modified (phosphothreonine).

The protein belongs to the major facilitator (TC 2.A.1) superfamily. Organic cation transporter (TC 2.A.1.19) family. Interacts with PDZK1. Post-translationally, glycosylated. Glycosylation affects the expression levels. In terms of processing, not glycosylated. Strongly expressed in kidney, skeletal muscle, heart and placenta. Primarily expressed by surface epithelial cells of the colon (at protein level). Expressed in CD68 macrophage and CD43 T-cells but not in CD20 B-cells. In testis, localized to Sertoli cell basal membranes, peritubular myoid cells and Leydig cells.

The protein resides in the cell membrane. It is found in the apical cell membrane. It localises to the basal cell membrane. The protein localises to the endoplasmic reticulum. The catalysed reaction is (R)-carnitine(out) + Na(+)(out) = (R)-carnitine(in) + Na(+)(in). It carries out the reaction glycine betaine(out) + Na(+)(out) = glycine betaine(in) + Na(+)(in). It catalyses the reaction glycine betaine(out) + (R)-carnitine(in) = glycine betaine(in) + (R)-carnitine(out). The enzyme catalyses O-butanoyl-(R)-carnitine(out) + Na(+)(out) = O-butanoyl-(R)-carnitine(in) + Na(+)(in). The catalysed reaction is O-acetyl-(R)-carnitine(out) + Na(+)(out) = O-acetyl-(R)-carnitine(in) + Na(+)(in). It carries out the reaction O-propanoyl-(R)-carnitine(out) + Na(+)(out) = O-propanoyl-(R)-carnitine(in) + Na(+)(in). It catalyses the reaction (S)-carnitine(out) + Na(+)(out) = (S)-carnitine(in) + Na(+)(in). The enzyme catalyses an O-acyl-(R)-carnitine(out) + Na(+)(out) = an O-acyl-(R)-carnitine(in) + Na(+)(in). The catalysed reaction is L-glutamyl-L-arginyl-glycyl-L-methionyl-L-threonine(out) + Na(+)(out) = L-glutamyl-L-arginyl-glycyl-L-methionyl-L-threonine(in) + Na(+)(in). It carries out the reaction N,N-dimethylglycine(out) + Na(+)(out) = N,N-dimethylglycine(in) + Na(+)(in). With respect to regulation, inhibited by emetine, quinidine and verapamil. The IC(50) of emetine is 4.2 uM. Not inhibited by valproic acid. Transport of (R)-carnitine is stimulated by cholesterol in the plasma membrane. Functionally, sodium-ion dependent, high affinity carnitine transporter. Involved in the active cellular uptake of carnitine. Transports one sodium ion with one molecule of carnitine. Also transports organic cations such as tetraethylammonium (TEA) without the involvement of sodium. Relative uptake activity ratio of carnitine to TEA is 11.3. In intestinal epithelia, transports the quorum-sensing pentapeptide CSF (competence and sporulation factor) from B.subtilis which induces cytoprotective heat shock proteins contributing to intestinal homeostasis. May also contribute to regulate the transport of organic compounds in testis across the blood-testis-barrier. Its function is as follows. Retained in the ER, unable to perform carnitine uptake. The polypeptide is Organic cation/carnitine transporter 2 (Homo sapiens (Human)).